Consider the following 141-residue polypeptide: Calcitonin (141 aa).

A signal peptide spans 1-25 (MGFQKFSPFLALSILVLLQAGSLHA). The propeptide occupies 26–82 (APFRSALESSPADPATLSEDEARLLLAALVQDYVQMKASELEQEQEREGSSLDSPRS). A Phosphoserine modification is found at serine 43. Disordered stretches follow at residues 64–85 (SELEQEQEREGSSLDSPRSKRC) and 111–141 (IGVGAPGKKRDMSSDLERDHRPHVSMPQNAN). A disulfide bridge links cysteine 85 with cysteine 91. Proline amide is present on proline 116. Residues 118–132 (KKRDMSSDLERDHRP) are compositionally biased toward basic and acidic residues.

Belongs to the calcitonin family.

The protein localises to the secreted. Functionally, calcitonin is a peptide hormone that causes a rapid but short-lived drop in the level of calcium and phosphate in blood by promoting the incorporation of those ions in the bones. Calcitonin function is mediated by the calcitonin receptor/CALCR and the CALCR-RAMP2 (AMYR2) receptor complex. Katacalcin is a potent plasma calcium-lowering peptide. This Homo sapiens (Human) protein is Calcitonin.